The sequence spans 354 residues: UDP-3-O-acylglucosamine N-acyltransferase (354 aa).

His247 acts as the Proton acceptor in catalysis.

It belongs to the transferase hexapeptide repeat family. LpxD subfamily. As to quaternary structure, homotrimer.

The catalysed reaction is a UDP-3-O-[(3R)-3-hydroxyacyl]-alpha-D-glucosamine + a (3R)-hydroxyacyl-[ACP] = a UDP-2-N,3-O-bis[(3R)-3-hydroxyacyl]-alpha-D-glucosamine + holo-[ACP] + H(+). The protein operates within bacterial outer membrane biogenesis; LPS lipid A biosynthesis. Its function is as follows. Catalyzes the N-acylation of UDP-3-O-acylglucosamine using 3-hydroxyacyl-ACP as the acyl donor. Is involved in the biosynthesis of lipid A, a phosphorylated glycolipid that anchors the lipopolysaccharide to the outer membrane of the cell. The chain is UDP-3-O-acylglucosamine N-acyltransferase from Chlamydia trachomatis serovar L2b (strain UCH-1/proctitis).